We begin with the raw amino-acid sequence, 231 residues long: uncharacterized protein (231 aa).

Residues 1–10 (MDGKKREVEN) are compositionally biased toward basic and acidic residues. Positions 1–35 (MDGKKREVENGKNGNNIKDGNSSNTTNYGKDTKTT) are disordered. The segment covering 11–24 (GKNGNNIKDGNSSN) has biased composition (low complexity). Residues 25–35 (TTNYGKDTKTT) show a composition bias toward polar residues.

This is an uncharacterized protein from Aquifex aeolicus (strain VF5).